Consider the following 201-residue polypeptide: Holliday junction branch migration complex subunit RuvA (201 aa).

Residues 1–63 form a domain I region; that stretch reads MIEYIKGEIA…EDAYVLYGFA (63 aa). Residues 64 to 142 form a domain II region; it reads DKQERELFLL…TGAMAATAVG (79 aa). Positions 143 to 153 are flexible linker; sequence GAAGALLPAMN. The segment at 153–201 is domain III; that stretch reads NAEVQEEAIAALTMLGFAAAPSQKAVLAILKEEPDAPVEKVIKLALKRL.

This sequence belongs to the RuvA family. Homotetramer. Forms an RuvA(8)-RuvB(12)-Holliday junction (HJ) complex. HJ DNA is sandwiched between 2 RuvA tetramers; dsDNA enters through RuvA and exits via RuvB. An RuvB hexamer assembles on each DNA strand where it exits the tetramer. Each RuvB hexamer is contacted by two RuvA subunits (via domain III) on 2 adjacent RuvB subunits; this complex drives branch migration. In the full resolvosome a probable DNA-RuvA(4)-RuvB(12)-RuvC(2) complex forms which resolves the HJ.

It localises to the cytoplasm. Its function is as follows. The RuvA-RuvB-RuvC complex processes Holliday junction (HJ) DNA during genetic recombination and DNA repair, while the RuvA-RuvB complex plays an important role in the rescue of blocked DNA replication forks via replication fork reversal (RFR). RuvA specifically binds to HJ cruciform DNA, conferring on it an open structure. The RuvB hexamer acts as an ATP-dependent pump, pulling dsDNA into and through the RuvAB complex. HJ branch migration allows RuvC to scan DNA until it finds its consensus sequence, where it cleaves and resolves the cruciform DNA. The chain is Holliday junction branch migration complex subunit RuvA from Bacteroides fragilis (strain ATCC 25285 / DSM 2151 / CCUG 4856 / JCM 11019 / LMG 10263 / NCTC 9343 / Onslow / VPI 2553 / EN-2).